Consider the following 347-residue polypeptide: Guanine nucleotide-binding protein subunit beta (347 aa).

7 WD repeats span residues 60–90 (GHLA…LVWD), 102–132 (LRSS…SIYN), 148–177 (SHTG…ILWD), 189–219 (DHNG…KLWD), 231–261 (GHEA…RLFD), 275–305 (NILC…NVWD), and 317–347 (GHGN…KIWA).

Belongs to the WD repeat G protein beta family. In terms of assembly, g proteins are composed of 3 units, alpha, beta and gamma. Interacts with gpgA, and this requires phlp1.

The protein localises to the cytoplasm. The protein resides in the cell membrane. Guanine nucleotide-binding proteins (G proteins) are involved as a modulator or transducer in various transmembrane signaling systems. The beta and gamma chains are required for the GTPase activity, for replacement of GDP by GTP, and for G protein-effector interaction. Required for normal chemotaxis in response to cAMP and for aggregation during scorocarp development. The polypeptide is Guanine nucleotide-binding protein subunit beta (gpbA) (Dictyostelium discoideum (Social amoeba)).